Reading from the N-terminus, the 303-residue chain is Geranylgeranyl pyrophosphate synthase (303 aa).

Isopentenyl diphosphate is bound by residues Lys-30, Arg-33, and His-62. Asp-69 and Asp-73 together coordinate Mg(2+). Arg-78 provides a ligand contact to dimethylallyl diphosphate. Arg-79 lines the isopentenyl diphosphate pocket. 5 residues coordinate dimethylallyl diphosphate: Lys-156, Thr-157, Gln-190, Lys-207, and Lys-217.

This sequence belongs to the FPP/GGPP synthase family. It depends on Mg(2+) as a cofactor.

The protein localises to the cytoplasm. It catalyses the reaction isopentenyl diphosphate + dimethylallyl diphosphate = (2E)-geranyl diphosphate + diphosphate. The enzyme catalyses isopentenyl diphosphate + (2E)-geranyl diphosphate = (2E,6E)-farnesyl diphosphate + diphosphate. It carries out the reaction isopentenyl diphosphate + (2E,6E)-farnesyl diphosphate = (2E,6E,10E)-geranylgeranyl diphosphate + diphosphate. The protein operates within isoprenoid biosynthesis; farnesyl diphosphate biosynthesis; farnesyl diphosphate from geranyl diphosphate and isopentenyl diphosphate: step 1/1. It functions in the pathway isoprenoid biosynthesis; geranyl diphosphate biosynthesis; geranyl diphosphate from dimethylallyl diphosphate and isopentenyl diphosphate: step 1/1. Its pathway is isoprenoid biosynthesis; geranylgeranyl diphosphate biosynthesis; geranylgeranyl diphosphate from farnesyl diphosphate and isopentenyl diphosphate: step 1/1. Its function is as follows. Catalyzes the trans-addition of the three molecules of IPP onto DMAPP to form geranylgeranyl pyrophosphate. The sequence is that of Geranylgeranyl pyrophosphate synthase from Mucor circinelloides f. lusitanicus (Mucor racemosus var. lusitanicus).